Consider the following 365-residue polypeptide: Uroporphyrinogen decarboxylase (365 aa).

Substrate contacts are provided by residues 27–31 (RQAGR), Asp-77, Tyr-154, Thr-209, and His-327.

It belongs to the uroporphyrinogen decarboxylase family. Homodimer.

It is found in the cytoplasm. It catalyses the reaction uroporphyrinogen III + 4 H(+) = coproporphyrinogen III + 4 CO2. It participates in porphyrin-containing compound metabolism; protoporphyrin-IX biosynthesis; coproporphyrinogen-III from 5-aminolevulinate: step 4/4. Its function is as follows. Catalyzes the decarboxylation of four acetate groups of uroporphyrinogen-III to yield coproporphyrinogen-III. This Nitrosospira multiformis (strain ATCC 25196 / NCIMB 11849 / C 71) protein is Uroporphyrinogen decarboxylase.